The primary structure comprises 691 residues: Protein 4.2 (691 aa).

Gly2 is lipidated: N-myristoyl glycine. Residues 31-39 are band 3 binding; that stretch reads LTLRRGQSF. Ser248 is subject to Phosphoserine. A Phosphotyrosine modification is found at Tyr570.

The protein belongs to the transglutaminase superfamily. Transglutaminase family. In terms of assembly, component of the ankyrin-1 complex in the erythrocyte, composed of ANK1, RHCE, RHAG, SLC4A1, EPB42, GYPA, GYPB and AQP1. Interacts with SLC4A1 (via the cytoplasmic domain); this interaction is mediated by the SLC4A1 Band 3-I dimer. Interacts with ANK1 (via ANK 1-13 repeats). Interacts with AQP1 (via the C-terminal).

Its subcellular location is the cell membrane. The protein resides in the cytoplasm. The protein localises to the cytoskeleton. In terms of biological role, component of the ankyrin-1 complex, a multiprotein complex involved in the stability and shape of the erythrocyte membrane. This chain is Protein 4.2, found in Mus musculus (Mouse).